Reading from the N-terminus, the 430-residue chain is Tyrosine--tRNA ligase (430 aa).

Y32 lines the L-tyrosine pocket. The 'HIGH' region motif lies at 37-46 (PTADSLHIGH). 2 residues coordinate L-tyrosine: Y172 and Q176. A 'KMSKS' region motif is present at residues 232–236 (KFGKT). K235 is a binding site for ATP. One can recognise an S4 RNA-binding domain in the interval 362–429 (VKAVDLFVDN…GKKNYYLIIA (68 aa)).

The protein belongs to the class-I aminoacyl-tRNA synthetase family. TyrS type 1 subfamily. In terms of assembly, homodimer.

It is found in the cytoplasm. The catalysed reaction is tRNA(Tyr) + L-tyrosine + ATP = L-tyrosyl-tRNA(Tyr) + AMP + diphosphate + H(+). In terms of biological role, catalyzes the attachment of tyrosine to tRNA(Tyr) in a two-step reaction: tyrosine is first activated by ATP to form Tyr-AMP and then transferred to the acceptor end of tRNA(Tyr). The sequence is that of Tyrosine--tRNA ligase from Bacteroides fragilis (strain ATCC 25285 / DSM 2151 / CCUG 4856 / JCM 11019 / LMG 10263 / NCTC 9343 / Onslow / VPI 2553 / EN-2).